An 82-amino-acid chain; its full sequence is Small ribosomal subunit protein uS17 (82 aa).

Belongs to the universal ribosomal protein uS17 family. As to quaternary structure, part of the 30S ribosomal subunit.

Functionally, one of the primary rRNA binding proteins, it binds specifically to the 5'-end of 16S ribosomal RNA. This chain is Small ribosomal subunit protein uS17, found in Bradyrhizobium diazoefficiens (strain JCM 10833 / BCRC 13528 / IAM 13628 / NBRC 14792 / USDA 110).